Here is a 177-residue protein sequence, read N- to C-terminus: Large ribosomal subunit protein uL6 (177 aa).

This sequence belongs to the universal ribosomal protein uL6 family. Part of the 50S ribosomal subunit.

Its function is as follows. This protein binds to the 23S rRNA, and is important in its secondary structure. It is located near the subunit interface in the base of the L7/L12 stalk, and near the tRNA binding site of the peptidyltransferase center. The polypeptide is Large ribosomal subunit protein uL6 (Teredinibacter turnerae (strain ATCC 39867 / T7901)).